Here is a 116-residue protein sequence, read N- to C-terminus: HTH-type transcriptional regulator AnsR (116 aa).

Residues 6–60 (LTELRKKKNWSLQYTADLLGIAKSTYAGYESGYRRPSLEALAMLADLFDTTCDEL) form the HTH cro/C1-type domain. The segment at residues 17–36 (LQYTADLLGIAKSTYAGYES) is a DNA-binding region (H-T-H motif).

Functionally, transcriptional repressor for the ans operon coding for L-asparaginase and L-aspartase. NH4(+) may influence this repression. This Bacillus subtilis (strain 168) protein is HTH-type transcriptional regulator AnsR (ansR).